Here is an 833-residue protein sequence, read N- to C-terminus: MKVVFVIFFFFLFQFCISVDTIMRRQSLRDGEVILSAGKRFAFGFFSLGDSELRYVGIWYAQISQQTIVWVANRDHPINDTSGMVKFSNRGNLSVYASDNETELIWSTNVSDSMLEPTLVATLSDLGNLVLFDPVTGRSFWESFDHPTDTFLPFMRLGFTRKDGLDRSLTSWKSHGDPGSGDLILRMERRGFPQLILYKGVTPWWRMGSWTGHRWSGVPEMPIGYIFNNSFVNNEDEVSFTYGVTDASVITRTMVNETGTMHRFTWIARDKRWNDFWSVPKEQCDNYAHCGPNGYCDSPSSKTFECTCLPGFEPKFPRHWFLRDSSGGCTKKKRASICSEKDGFVKLKRMKIPDTSDASVDMNITLKECKQRCLKNCSCVAYASAYHESKRGAIGCLKWHGGMLDARTYLNSGQDFYIRVDKEELARWNRNGLSGKRRVLLILISLIAAVMLLTVILFCVVRERRKSNRHRSSSANFAPVPFDFDESFRFEQDKARNRELPLFDLNTIVAATNNFSSQNKLGAGGFGPVYKGVLQNRMEIAVKRLSRNSGQGMEEFKNEVKLISKLQHRNLVRILGCCVELEEKMLVYEYLPNKSLDYFIFHEEQRAELDWPKRMEIVRGIARGILYLHQDSRLRIIHRDLKASNILLDSEMIPKISDFGMARIFGGNQMEGCTSRVVGTFGYMAPEYAMEGQFSIKSDVYSFGVLMLEIITGKKNSAFHEESSNLVGHIWDLWENGEATEIIDNLMDQETYDEREVMKCIQIGLLCVQENASDRVDMSSVVIMLGHNATNLPNPKHPAFTSARRRGGENGACLKGQTGISVNDVTFSDIQGR.

The N-terminal stretch at 1–18 is a signal peptide; sequence MKVVFVIFFFFLFQFCIS. One can recognise a Bulb-type lectin domain in the interval 19–144; that stretch reads VDTIMRRQSL…VTGRSFWESF (126 aa). The Extracellular segment spans residues 19–440; it reads VDTIMRRQSL…NGLSGKRRVL (422 aa). N-linked (GlcNAc...) asparagine glycans are attached at residues Asn-79, Asn-92, Asn-100, Asn-109, Asn-228, and Asn-256. Residues 280-330 form the EGF-like domain; that stretch reads PKEQCDNYAHCGPNGYCDSPSSKTFECTCLPGFEPKFPRHWFLRDSSGGCT. 3 disulfides stabilise this stretch: Cys-284–Cys-296, Cys-290–Cys-306, and Cys-308–Cys-329. The PAN domain maps to 338–421; sequence CSEKDGFVKL…SGQDFYIRVD (84 aa). N-linked (GlcNAc...) asparagine glycans are attached at residues Asn-363 and Asn-376. 2 disulfide bridges follow: Cys-369–Cys-396 and Cys-373–Cys-379. Residues 441–461 traverse the membrane as a helical segment; that stretch reads LILISLIAAVMLLTVILFCVV. Over 462 to 833 the chain is Cytoplasmic; that stretch reads RERRKSNRHR…DVTFSDIQGR (372 aa). The Protein kinase domain maps to 515–800; the sequence is FSSQNKLGAG…NLPNPKHPAF (286 aa). Residues 521–529 and Lys-543 contribute to the ATP site; that span reads LGAGGFGPV. A phosphoserine mark is found at Ser-549 and Ser-564. Residues 604–621 form a caM-binding region; the sequence is EQRAELDWPKRMEIVRGI. The active-site Proton acceptor is Asp-640. Phosphoserine occurs at positions 644 and 657. Thr-674 carries the post-translational modification Phosphothreonine. A phosphoserine mark is found at Ser-717 and Ser-821.

The protein belongs to the protein kinase superfamily. Ser/Thr protein kinase family.

The protein resides in the cell membrane. It catalyses the reaction L-seryl-[protein] + ATP = O-phospho-L-seryl-[protein] + ADP + H(+). The enzyme catalyses L-threonyl-[protein] + ATP = O-phospho-L-threonyl-[protein] + ADP + H(+). The protein is G-type lectin S-receptor-like serine/threonine-protein kinase RKS1 (RKS1) of Arabidopsis thaliana (Mouse-ear cress).